The following is a 505-amino-acid chain: Peroxisome proliferator-activated receptor gamma (505 aa).

An O-linked (GlcNAc) threonine glycan is attached at Thr-84. Ser-112 carries the phosphoserine modification. The nuclear receptor DNA-binding region spans 136 to 210; it reads AIECRVCGDK…VGMSHNAIRF (75 aa). 2 consecutive NR C4-type zinc fingers follow at residues 139-159 and 176-198; these read CRVC…CEGC and CDLN…FQKC. The interval 205-280 is interaction with FAM120B; sequence HNAIRFGRMP…DKSPFVIYDM (76 aa). The NR LBD domain maps to 238–503; it reads DLRALAKHLY…HPLLQEIYKD (266 aa). Lys-252 participates in a covalent cross-link: Glycyl lysine isopeptide (Lys-Gly) (interchain with G-Cter in ubiquitin). Rosiglitazone contacts are provided by residues 314–317, His-351, His-477, and Tyr-501; that span reads QFRS. The 9aaTAD motif lies at 495–503; the sequence is PLLQEIYKD.

This sequence belongs to the nuclear hormone receptor family. NR1 subfamily. In terms of assembly, interacts with FOXO1 (acetylated form). Heterodimer with other nuclear receptors, such as RXRA. The heterodimer with the retinoic acid receptor RXRA is called adipocyte-specific transcription factor ARF6. Interacts with NCOA6 coactivator, leading to a strong increase in transcription of target genes. Interacts with coactivator PPARBP, leading to a mild increase in transcription of target genes. Interacts with NOCA7 in a ligand-inducible manner. Interacts with NCOA1 and NCOA2 LXXLL motifs. Interacts with ASXL1, ASXL2, DNTTIP2, FAM120B, MAP2K1/MEK1, NR0B2, PDPK1, PRDM16, PRMT2 and TGFB1I1. Interacts (when activated by agonist) with PPP5C. Interacts with HELZ2 and THRAP3; the interaction stimulates the transcriptional activity of PPARG. Interacts with PER2, the interaction is ligand dependent and blocks PPARG recruitment to target promoters. Interacts with NOCT. Interacts with ACTN4. Interacts (when in the liganded conformation) with GPS2. Interacts with CRY1 and CRY2 in a ligand-dependent manner. In the absence of hormonal ligand, interacts with TACC1. In macrophages, interacts with PAQR3 and STUB1; the interactions promote PPARG poylubiquitination and STUB1-mediated degradation. Post-translationally, O-GlcNAcylation at Thr-84 reduces transcriptional activity in adipocytes. Phosphorylated in basal conditions and dephosphorylated when treated with the ligand. May be dephosphorylated by PPP5C. The phosphorylated form may be inactive and dephosphorylation at Ser-112 induces adipogenic activity. In terms of processing, ubiquitinated by E3 ubiquitin-protein ligase complex containing FBXO9; leading to proteasomal degradation. Ubiquitinated at Lys-252 by TRIM55 leading to proteasomal degradation. Ubiquitinated by E3 ubiquitin-protein ligase STUB1/CHIP; leading to proteasomal degradation. As to expression, highest expression in adipose tissue. Lower in skeletal muscle, spleen, heart and liver. Also detectable in placenta, lung and ovary.

The protein resides in the nucleus. It is found in the cytoplasm. With respect to regulation, PDPK1 activates its transcriptional activity independently of its kinase activity. Nuclear receptor that binds peroxisome proliferators such as hypolipidemic drugs and fatty acids. Once activated by a ligand, the nuclear receptor binds to DNA specific PPAR response elements (PPRE) and modulates the transcription of its target genes, such as acyl-CoA oxidase. It therefore controls the peroxisomal beta-oxidation pathway of fatty acids. Key regulator of adipocyte differentiation and glucose homeostasis. ARF6 acts as a key regulator of the tissue-specific adipocyte P2 (aP2) enhancer. Acts as a critical regulator of gut homeostasis by suppressing NF-kappa-B-mediated pro-inflammatory responses. Plays a role in the regulation of cardiovascular circadian rhythms by regulating the transcription of BMAL1 in the blood vessels. In terms of biological role, (Microbial infection) Upon treatment with M.tuberculosis or its lipoprotein LpqH, phosphorylation of MAPK p38 and IL-6 production are modulated, probably via this protein. The protein is Peroxisome proliferator-activated receptor gamma (PPARG) of Homo sapiens (Human).